Consider the following 247-residue polypeptide: Uridylate kinase (247 aa).

15–18 is a binding site for ATP; sequence KLSG. Residues 23 to 28 form an involved in allosteric activation by GTP region; that stretch reads GDEGFG. G57 lines the UMP pocket. ATP contacts are provided by G58 and R62. UMP is bound by residues D77 and 138-145; that span reads TGNPFFTT. Positions 165, 171, and 174 each coordinate ATP.

Belongs to the UMP kinase family. In terms of assembly, homohexamer.

The protein localises to the cytoplasm. The enzyme catalyses UMP + ATP = UDP + ADP. Its pathway is pyrimidine metabolism; CTP biosynthesis via de novo pathway; UDP from UMP (UMPK route): step 1/1. With respect to regulation, allosterically activated by GTP. Inhibited by UTP. Functionally, catalyzes the reversible phosphorylation of UMP to UDP. The protein is Uridylate kinase of Colwellia psychrerythraea (strain 34H / ATCC BAA-681) (Vibrio psychroerythus).